The following is a 485-amino-acid chain: Glutamate--tRNA ligase (485 aa).

The 'HIGH' region motif lies at 12-22 (PSPTGEPHVGT). Residues C109, C111, C136, and H138 each coordinate Zn(2+). A 'KMSKS' region motif is present at residues 253-257 (KLSKR). K256 lines the ATP pocket.

It belongs to the class-I aminoacyl-tRNA synthetase family. Glutamate--tRNA ligase type 1 subfamily. Monomer. It depends on Zn(2+) as a cofactor.

The protein localises to the cytoplasm. The catalysed reaction is tRNA(Glu) + L-glutamate + ATP = L-glutamyl-tRNA(Glu) + AMP + diphosphate. Functionally, catalyzes the attachment of glutamate to tRNA(Glu) in a two-step reaction: glutamate is first activated by ATP to form Glu-AMP and then transferred to the acceptor end of tRNA(Glu). This Agrobacterium fabrum (strain C58 / ATCC 33970) (Agrobacterium tumefaciens (strain C58)) protein is Glutamate--tRNA ligase.